Consider the following 396-residue polypeptide: Stearoyl-[acyl-carrier-protein] 9-desaturase, chloroplastic (396 aa).

The N-terminal 33 residues, methionine 1–methionine 33, are a transit peptide targeting the chloroplast. Fe cation contacts are provided by glutamate 138, glutamate 176, histidine 179, glutamate 229, glutamate 262, and histidine 265.

Belongs to the fatty acid desaturase type 2 family. In terms of assembly, homodimer. Fe(2+) serves as cofactor.

It localises to the plastid. It is found in the chloroplast. It carries out the reaction octadecanoyl-[ACP] + 2 reduced [2Fe-2S]-[ferredoxin] + O2 + 2 H(+) = (9Z)-octadecenoyl-[ACP] + 2 oxidized [2Fe-2S]-[ferredoxin] + 2 H2O. It functions in the pathway lipid metabolism; fatty acid metabolism. In terms of biological role, converts stearoyl-ACP to oleoyl-ACP by introduction of a cis double bond between carbons 9 and 10 of the acyl chain. In Helianthus annuus (Common sunflower), this protein is Stearoyl-[acyl-carrier-protein] 9-desaturase, chloroplastic.